Here is a 383-residue protein sequence, read N- to C-terminus: BRISC and BRCA1-A complex member 2 (383 aa).

Met-1 carries the N-acetylmethionine modification. Ser-2 bears the Phosphoserine mark. 2 UEV-like regions span residues 30 to 147 (DATN…TLLE) and 275 to 364 (IAAF…RAKA).

The protein belongs to the BABAM2 family. Component of the ARISC complex, at least composed of UIMC1/RAP80, ABRAXAS1, BRCC3/BRCC36, BABAM2 and BABAM1/NBA1. Component of the BRCA1-A complex, at least composed of BRCA1, BARD1, UIMC1/RAP80, ABRAXAS1, BRCC3/BRCC36, BABAM2 and BABAM1/NBA1. In the BRCA1-A complex, interacts directly with ABRAXAS1, BRCC3/BRCC36 and BABAM1/NBA1. Binds polyubiquitin. Component of the BRISC complex, at least composed of ABRAXAS2, BRCC3/BRCC36, BABAM2 and BABAM1/NBA1. Identified in a complex with SHMT2 and the other subunits of the BRISC complex. Component of the BRCA1/BRCA2 containing complex (BRCC), which also contains BRCA1, BRCA2, BARD1, BRCC3/BRCC36 and RAD51. BRCC is a ubiquitin E3 ligase complex that enhances cellular survival following DNA damage. May interact with FAS and TNFRSF1A.

It is found in the cytoplasm. Its subcellular location is the nucleus. Its function is as follows. Component of the BRCA1-A complex, a complex that specifically recognizes 'Lys-63'-linked ubiquitinated histones H2A and H2AX at DNA lesions sites, leading to target the BRCA1-BARD1 heterodimer to sites of DNA damage at double-strand breaks (DSBs). The BRCA1-A complex also possesses deubiquitinase activity that specifically removes 'Lys-63'-linked ubiquitin on histones H2A and H2AX. In the BRCA1-A complex, it acts as an adapter that bridges the interaction between BABAM1/NBA1 and the rest of the complex, thereby being required for the complex integrity and modulating the E3 ubiquitin ligase activity of the BRCA1-BARD1 heterodimer. Component of the BRISC complex, a multiprotein complex that specifically cleaves 'Lys-63'-linked ubiquitin in various substrates. Within the BRISC complex, acts as an adapter that bridges the interaction between BABAM1/NBA1 and the rest of the complex, thereby being required for the complex integrity. The BRISC complex is required for normal mitotic spindle assembly and microtubule attachment to kinetochores via its role in deubiquitinating NUMA1. The BRISC complex plays a role in interferon signaling via its role in the deubiquitination of the interferon receptor IFNAR1; deubiquitination increases IFNAR1 activity by enhancing its stability and cell surface expression. Down-regulates the response to bacterial lipopolysaccharide (LPS) via its role in IFNAR1 deubiquitination. May play a role in homeostasis or cellular differentiation in cells of neural, epithelial and germline origins. May also act as a death receptor-associated anti-apoptotic protein, which inhibits the mitochondrial apoptotic pathway. May regulate TNF-alpha signaling through its interactions with TNFRSF1A; however these effects may be indirect. The polypeptide is BRISC and BRCA1-A complex member 2 (BABAM2) (Bos taurus (Bovine)).